The primary structure comprises 506 residues: Glutamate--tRNA ligase (506 aa).

The 'HIGH' region signature appears at 21–31; it reads PSPTGIPHVGM. The 'KMSKS' region motif lies at 265-269; it reads KLSKR. Lys268 serves as a coordination point for ATP.

Belongs to the class-I aminoacyl-tRNA synthetase family. Glutamate--tRNA ligase type 1 subfamily. In terms of assembly, monomer.

Its subcellular location is the cytoplasm. It catalyses the reaction tRNA(Glu) + L-glutamate + ATP = L-glutamyl-tRNA(Glu) + AMP + diphosphate. Its function is as follows. Catalyzes the attachment of glutamate to tRNA(Glu) in a two-step reaction: glutamate is first activated by ATP to form Glu-AMP and then transferred to the acceptor end of tRNA(Glu). This is Glutamate--tRNA ligase from Bifidobacterium adolescentis (strain ATCC 15703 / DSM 20083 / NCTC 11814 / E194a).